Reading from the N-terminus, the 199-residue chain is Dephospho-CoA kinase (199 aa).

A DPCK domain is found at V3–P199. G11–T16 is an ATP binding site.

The protein belongs to the CoaE family.

It localises to the cytoplasm. It catalyses the reaction 3'-dephospho-CoA + ATP = ADP + CoA + H(+). It participates in cofactor biosynthesis; coenzyme A biosynthesis; CoA from (R)-pantothenate: step 5/5. Catalyzes the phosphorylation of the 3'-hydroxyl group of dephosphocoenzyme A to form coenzyme A. This chain is Dephospho-CoA kinase, found in Rhodopseudomonas palustris (strain HaA2).